The following is a 381-amino-acid chain: 1-deoxy-D-xylulose 5-phosphate reductoisomerase (381 aa).

Residues threonine 11, glycine 12, serine 13, isoleucine 14, asparagine 37, and asparagine 121 each coordinate NADPH. Lysine 122 serves as a coordination point for 1-deoxy-D-xylulose 5-phosphate. An NADPH-binding site is contributed by glutamate 123. Mn(2+) is bound at residue aspartate 147. Residues serine 148, glutamate 149, serine 173, and histidine 196 each coordinate 1-deoxy-D-xylulose 5-phosphate. Glutamate 149 serves as a coordination point for Mn(2+). An NADPH-binding site is contributed by glycine 202. 4 residues coordinate 1-deoxy-D-xylulose 5-phosphate: serine 209, asparagine 214, lysine 215, and glutamate 218. Glutamate 218 provides a ligand contact to Mn(2+).

It belongs to the DXR family. Requires Mg(2+) as cofactor. It depends on Mn(2+) as a cofactor.

It catalyses the reaction 2-C-methyl-D-erythritol 4-phosphate + NADP(+) = 1-deoxy-D-xylulose 5-phosphate + NADPH + H(+). Its pathway is isoprenoid biosynthesis; isopentenyl diphosphate biosynthesis via DXP pathway; isopentenyl diphosphate from 1-deoxy-D-xylulose 5-phosphate: step 1/6. Catalyzes the NADPH-dependent rearrangement and reduction of 1-deoxy-D-xylulose-5-phosphate (DXP) to 2-C-methyl-D-erythritol 4-phosphate (MEP). The chain is 1-deoxy-D-xylulose 5-phosphate reductoisomerase from Ruminiclostridium cellulolyticum (strain ATCC 35319 / DSM 5812 / JCM 6584 / H10) (Clostridium cellulolyticum).